We begin with the raw amino-acid sequence, 160 residues long: Protein-export protein SecB (160 aa).

It belongs to the SecB family. In terms of assembly, homotetramer, a dimer of dimers. One homotetramer interacts with 1 SecA dimer.

The protein resides in the cytoplasm. Functionally, one of the proteins required for the normal export of preproteins out of the cell cytoplasm. It is a molecular chaperone that binds to a subset of precursor proteins, maintaining them in a translocation-competent state. It also specifically binds to its receptor SecA. The sequence is that of Protein-export protein SecB from Rhizobium johnstonii (strain DSM 114642 / LMG 32736 / 3841) (Rhizobium leguminosarum bv. viciae).